A 73-amino-acid polypeptide reads, in one-letter code: Beta-defensin 108B (73 aa).

Positions Met1–Gly22 are cleaved as a signal peptide. Cystine bridges form between Cys28–Cys55, Cys35–Cys49, and Cys39–Cys56.

The protein belongs to the beta-defensin family. In terms of tissue distribution, specifically expressed in testis. Low expression is detected also in liver.

It localises to the secreted. Its function is as follows. Has antibacterial activity. In Homo sapiens (Human), this protein is Beta-defensin 108B (DEFB108B).